Reading from the N-terminus, the 115-residue chain is Large ribosomal subunit protein uL24 (115 aa).

Positions 49–68 (NMKTKHHPPSKDQEKGSITK) are disordered.

It belongs to the universal ribosomal protein uL24 family. Part of the 50S ribosomal subunit.

Functionally, one of two assembly initiator proteins, it binds directly to the 5'-end of the 23S rRNA, where it nucleates assembly of the 50S subunit. In terms of biological role, one of the proteins that surrounds the polypeptide exit tunnel on the outside of the subunit. This Phytoplasma australiense protein is Large ribosomal subunit protein uL24.